The sequence spans 156 residues: Cyanate hydratase (156 aa).

Active-site residues include arginine 96, glutamate 99, and serine 122.

Belongs to the cyanase family.

It catalyses the reaction cyanate + hydrogencarbonate + 3 H(+) = NH4(+) + 2 CO2. Its function is as follows. Catalyzes the reaction of cyanate with bicarbonate to produce ammonia and carbon dioxide. The polypeptide is Cyanate hydratase (Mycobacteroides abscessus (strain ATCC 19977 / DSM 44196 / CCUG 20993 / CIP 104536 / JCM 13569 / NCTC 13031 / TMC 1543 / L948) (Mycobacterium abscessus)).